Consider the following 570-residue polypeptide: Sulfite reductase [NADPH] hemoprotein beta-component (570 aa).

4 residues coordinate [4Fe-4S] cluster: C434, C440, C479, and C483. Residue C483 participates in siroheme binding.

The protein belongs to the nitrite and sulfite reductase 4Fe-4S domain family. As to quaternary structure, alpha(8)-beta(8). The alpha component is a flavoprotein, the beta component is a hemoprotein. The cofactor is siroheme. [4Fe-4S] cluster serves as cofactor.

It catalyses the reaction hydrogen sulfide + 3 NADP(+) + 3 H2O = sulfite + 3 NADPH + 4 H(+). It participates in sulfur metabolism; hydrogen sulfide biosynthesis; hydrogen sulfide from sulfite (NADPH route): step 1/1. Its function is as follows. Component of the sulfite reductase complex that catalyzes the 6-electron reduction of sulfite to sulfide. This is one of several activities required for the biosynthesis of L-cysteine from sulfate. The protein is Sulfite reductase [NADPH] hemoprotein beta-component of Shigella sonnei (strain Ss046).